Consider the following 195-residue polypeptide: Putative Tricorn-like protease N-terminal subunit (195 aa).

Belongs to the peptidase S41B family.

Its subcellular location is the cytoplasm. In terms of biological role, degrades oligopeptides in a sequential manner. This Sulfurisphaera tokodaii (strain DSM 16993 / JCM 10545 / NBRC 100140 / 7) (Sulfolobus tokodaii) protein is Putative Tricorn-like protease N-terminal subunit (triN).